A 454-amino-acid chain; its full sequence is Membrane-bound lytic murein transglycosylase F (454 aa).

Residues 1–24 (MRRPLRRVTVVLLWVALAIGVAWF) form the signal peptide. The non-LT domain stretch occupies residues 25–265 (YDYRRSMQSL…IYNRYYTAVD (241 aa)). Residues 266 to 454 (TFDYVDVKKF…YDILKQKKAV (189 aa)) form an LT domain region. Residue glutamate 311 is part of the active site.

In the N-terminal section; belongs to the bacterial solute-binding protein 3 family. This sequence in the C-terminal section; belongs to the transglycosylase Slt family.

Its subcellular location is the cell outer membrane. The catalysed reaction is Exolytic cleavage of the (1-&gt;4)-beta-glycosidic linkage between N-acetylmuramic acid (MurNAc) and N-acetylglucosamine (GlcNAc) residues in peptidoglycan, from either the reducing or the non-reducing ends of the peptidoglycan chains, with concomitant formation of a 1,6-anhydrobond in the MurNAc residue.. In terms of biological role, murein-degrading enzyme that degrades murein glycan strands and insoluble, high-molecular weight murein sacculi, with the concomitant formation of a 1,6-anhydromuramoyl product. Lytic transglycosylases (LTs) play an integral role in the metabolism of the peptidoglycan (PG) sacculus. Their lytic action creates space within the PG sacculus to allow for its expansion as well as for the insertion of various structures such as secretion systems and flagella. This is Membrane-bound lytic murein transglycosylase F from Desulfosudis oleivorans (strain DSM 6200 / JCM 39069 / Hxd3) (Desulfococcus oleovorans).